A 305-amino-acid polypeptide reads, in one-letter code: tRNA dimethylallyltransferase (305 aa).

9–16 serves as a coordination point for ATP; the sequence is GPTASGKS. 11-16 contributes to the substrate binding site; the sequence is TASGKS. The interaction with substrate tRNA stretch occupies residues 34–37; the sequence is DSKQ.

Belongs to the IPP transferase family. In terms of assembly, monomer. Mg(2+) is required as a cofactor.

The catalysed reaction is adenosine(37) in tRNA + dimethylallyl diphosphate = N(6)-dimethylallyladenosine(37) in tRNA + diphosphate. In terms of biological role, catalyzes the transfer of a dimethylallyl group onto the adenine at position 37 in tRNAs that read codons beginning with uridine, leading to the formation of N6-(dimethylallyl)adenosine (i(6)A). This Anaplasma marginale (strain Florida) protein is tRNA dimethylallyltransferase.